The chain runs to 288 residues: Serine/threonine-protein acetyltransferase YopJ (288 aa).

Residues H109 and E128 contribute to the active site. Residue H109 participates in CoA binding. 167 to 168 (RS) is a CoA binding site. C172 is an active-site residue. 1D-myo-inositol hexakisphosphate is bound by residues 182-185 (KLYI) and 224-225 (KH). 227 to 230 (QGKK) is a CoA binding site. R257 is a binding site for 1D-myo-inositol hexakisphosphate. CoA is bound at residue 266-270 (DGKEL).

The protein belongs to the acetyltransferase YopJ family. 1D-myo-inositol hexakisphosphate serves as cofactor.

It localises to the secreted. The enzyme catalyses L-threonyl-[protein] + acetyl-CoA = O-acetyl-L-threonyl-[protein] + CoA. It catalyses the reaction L-seryl-[protein] + acetyl-CoA = O-acetyl-L-seryl-[protein] + CoA. With respect to regulation, 1D-myo-inositol hexakisphosphate activates protein-acetyltransferase activity via an allosteric mechanism: 1D-myo-inositol hexakisphosphate-binding induces a conformational rearrangement that stimulates the interaction with acetyl-CoA. Serine/threonine-protein acetyltransferase translocated into infected cells, which inhibits the host immune response and induces cell death by mediating acetylation of target proteins. Inhibits the MAPK and NF-kappa-B signaling pathways by acetylating protein-kinases such as MAP2K1, MAP2K6, MAP3K7/TAK1 and I-kappa-B kinase (CHUK/IKKA and IKBKB) on serine and threonine residues critical for their activation by phosphorylation, thereby preventing protein-kinase activation. Promotes pyroptosis, a programmed cell death, in host cells by mediating acetylation of MAP3K7/TAK1: MAP3K7/TAK1 inactivation triggers activation of caspase-8 (CASP8), followed by CASP8-dependent cleavage of gasdermin-D (GSDMD) and induction of pyroptosis. Also able to induce intestinal barrier dysfunction by acetylating and inhibiting host protein-kinases RIPK2/RICK and MAP3K7/TAK1, thereby promoting cell death. The polypeptide is Serine/threonine-protein acetyltransferase YopJ (Yersinia pseudotuberculosis serotype I (strain IP32953)).